We begin with the raw amino-acid sequence, 131 residues long: Small ribosomal subunit protein uS8 (131 aa).

It belongs to the universal ribosomal protein uS8 family. In terms of assembly, part of the 30S ribosomal subunit. Contacts proteins S5 and S12.

Functionally, one of the primary rRNA binding proteins, it binds directly to 16S rRNA central domain where it helps coordinate assembly of the platform of the 30S subunit. This is Small ribosomal subunit protein uS8 from Campylobacter fetus subsp. fetus (strain 82-40).